Consider the following 1092-residue polypeptide: Probable cellulose synthase A catalytic subunit 6 [UDP-forming] (1092 aa).

At 1-280 (MEASAGLVAG…SSSRINPYRM (280 aa)) the chain is on the cytoplasmic side. Zn(2+) is bound by residues Cys42, Cys45, Cys61, Cys64, Cys69, Cys72, Cys84, and Cys87. The RING-type; degenerate zinc-finger motif lies at 42-88 (CQICGDDVGEGPDGEPFVACNECAFPVCRNCYDYERREGSQACPQCK). The disordered stretch occupies residues 100–123 (VAGDEEEDGVDDLEGEFGLDGRED). Residues 103–116 (DEEEDGVDDLEGEF) show a composition bias toward acidic residues. A helical membrane pass occupies residues 281–301 (IIIIRLVVLGFFFHYRVMHPV). Over 302–303 (ND) the chain is Extracellular. The helical transmembrane segment at 304–324 (AFALWLISVICEIWFAMSWIL) threads the bilayer. Residues 325–868 (DQFPKWLPIE…FLERFSYINS (544 aa)) lie on the Cytoplasmic side of the membrane. UDP-alpha-D-glucose contacts are provided by Ser363, Lys369, Glu370, and Asp399. The active site involves Asp399. Positions 453–480 (VRERRAMKRDYEEFKVRINALVAKAQKV) form a coiled coil. Residue Lys540 participates in UDP-alpha-D-glucose binding. Positions 541 and 565 each coordinate Mn(2+). Asp792 is a catalytic residue. Residues 869–889 (IVYPWTSIPLLAYCTLPAICL) traverse the membrane as a helical segment. Topologically, residues 890–901 (LTGKFITPELTN) are extracellular. The chain crosses the membrane as a helical span at residues 902-922 (VASLWFMSLFICIFVTGILEM). Over 923-937 (RWSGVAIDDWWRNEQ) the chain is Cytoplasmic. The chain crosses the membrane as a helical span at residues 938–958 (FWVIGGVSSHLFAVFQGLLKV). Over 959–987 (LAGVDTSFTVTSKAGDDEEFSELYTFKWT) the chain is Extracellular. The helical transmembrane segment at 988–1008 (TLLIPPTTLLLLNFIGVVAGV) threads the bilayer. Residues 1009–1019 (SNAINNGYESW) lie on the Cytoplasmic side of the membrane. A helical membrane pass occupies residues 1020–1040 (GPLFGKLFFAFWVIVHLYPFL). Residues 1041–1049 (KGLVGRQNR) lie on the Extracellular side of the membrane. The helical transmembrane segment at 1050-1070 (TPTIVIVWSILLASIFSLLWV) threads the bilayer. The Cytoplasmic portion of the chain corresponds to 1071–1092 (RIDPFLAKNNGPLLEECGLDCN).

This sequence belongs to the glycosyltransferase 2 family. Plant cellulose synthase subfamily. The cofactor is Mn(2+). Zn(2+) is required as a cofactor.

Its subcellular location is the cell membrane. It carries out the reaction [(1-&gt;4)-beta-D-glucosyl](n) + UDP-alpha-D-glucose = [(1-&gt;4)-beta-D-glucosyl](n+1) + UDP + H(+). It functions in the pathway glycan metabolism; plant cellulose biosynthesis. Functionally, probable catalytic subunit of cellulose synthase terminal complexes ('rosettes'), required for beta-1,4-glucan microfibril crystallization, a major mechanism of the cell wall formation. The polypeptide is Probable cellulose synthase A catalytic subunit 6 [UDP-forming] (CESA6) (Oryza sativa subsp. japonica (Rice)).